We begin with the raw amino-acid sequence, 363 residues long: Biotin synthase (363 aa).

3 positions are modified to phosphoserine: S13, S14, and S17. One can recognise a Radical SAM core domain in the interval 54–276; the sequence is KKVQQCTLLS…IATARICMPK (223 aa). Residues C69, C73, and C76 each coordinate [4Fe-4S] cluster. Residues C113, C146, C206, and R280 each contribute to the [2Fe-2S] cluster site. Positions 337–363 are disordered; it reads EYGTSTEGEDGTFTLPPKERLAPSPSL.

This sequence belongs to the radical SAM superfamily. Biotin synthase family. [4Fe-4S] cluster serves as cofactor. [2Fe-2S] cluster is required as a cofactor.

It catalyses the reaction (4R,5S)-dethiobiotin + (sulfur carrier)-SH + 2 reduced [2Fe-2S]-[ferredoxin] + 2 S-adenosyl-L-methionine = (sulfur carrier)-H + biotin + 2 5'-deoxyadenosine + 2 L-methionine + 2 oxidized [2Fe-2S]-[ferredoxin]. It functions in the pathway cofactor biosynthesis; biotin biosynthesis; biotin from 7,8-diaminononanoate: step 2/2. Its function is as follows. Catalyzes the last step of biotin biosynthesis, the conversion of dethiobiotin to biotin. In Schizosaccharomyces pombe (strain 972 / ATCC 24843) (Fission yeast), this protein is Biotin synthase (bio2).